Consider the following 83-residue polypeptide: Exodeoxyribonuclease 7 small subunit (83 aa).

The protein belongs to the XseB family. Heterooligomer composed of large and small subunits.

The protein resides in the cytoplasm. It catalyses the reaction Exonucleolytic cleavage in either 5'- to 3'- or 3'- to 5'-direction to yield nucleoside 5'-phosphates.. Functionally, bidirectionally degrades single-stranded DNA into large acid-insoluble oligonucleotides, which are then degraded further into small acid-soluble oligonucleotides. The sequence is that of Exodeoxyribonuclease 7 small subunit from Nitrobacter winogradskyi (strain ATCC 25391 / DSM 10237 / CIP 104748 / NCIMB 11846 / Nb-255).